The following is a 278-amino-acid chain: N-terminal Xaa-Pro-Lys N-methyltransferase 2 (278 aa).

Residues Gly-123, Arg-128, Asp-145, 174-175 (LQ), Gln-190, and His-195 contribute to the S-adenosyl-L-methionine site.

This sequence belongs to the methyltransferase superfamily. NTM1 family.

It is found in the nucleus. It catalyses the reaction N-terminal L-alanyl-L-prolyl-L-lysyl-[protein] + S-adenosyl-L-methionine = N-terminal N-methyl-L-alanyl-L-prolyl-L-lysyl-[protein] + S-adenosyl-L-homocysteine + H(+). The enzyme catalyses N-terminal L-prolyl-L-prolyl-L-lysyl-[protein] + S-adenosyl-L-methionine = N-terminal N-methyl-L-prolyl-L-prolyl-L-lysyl-[protein] + S-adenosyl-L-homocysteine + H(+). The catalysed reaction is N-terminal L-seryl-L-prolyl-L-lysyl-[protein] + S-adenosyl-L-methionine = N-terminal N-methyl-L-seryl-L-prolyl-L-lysyl-[protein] + S-adenosyl-L-homocysteine + H(+). Its function is as follows. Alpha N-methyltransferase that methylates the N-terminus of target proteins containing the N-terminal motif [Ala/Pro/Ser]-Pro-Lys when the initiator Met is cleaved. Specifically catalyzes monomethylation of exposed alpha-amino group of Ala or Ser residue in the [Ala/Ser]-Pro-Lys motif and Pro in the Pro-Pro-Lys motif. Predominantly functions as a mono-methyltransferase but is also able to di-/tri-methylate the GPKRIA peptide and di-methylate the PPKRIA peptide (in vitro). May activate NTMT1 by priming its substrates for trimethylation. This Danio rerio (Zebrafish) protein is N-terminal Xaa-Pro-Lys N-methyltransferase 2 (ntmt2).